The chain runs to 346 residues: Anthranilate phosphoribosyltransferase (346 aa).

5-phospho-alpha-D-ribose 1-diphosphate contacts are provided by residues Gly-80, 83-84, Thr-88, 90-93, 108-116, and Ser-120; these read GD, NIST, and KHGNTAVSS. Residue Gly-80 coordinates anthranilate. Ser-92 contributes to the Mg(2+) binding site. Residue Asn-111 participates in anthranilate binding. Arg-166 provides a ligand contact to anthranilate. Residues Asp-225 and Glu-226 each contribute to the Mg(2+) site.

It belongs to the anthranilate phosphoribosyltransferase family. As to quaternary structure, homodimer. Requires Mg(2+) as cofactor.

The catalysed reaction is N-(5-phospho-beta-D-ribosyl)anthranilate + diphosphate = 5-phospho-alpha-D-ribose 1-diphosphate + anthranilate. It participates in amino-acid biosynthesis; L-tryptophan biosynthesis; L-tryptophan from chorismate: step 2/5. In terms of biological role, catalyzes the transfer of the phosphoribosyl group of 5-phosphorylribose-1-pyrophosphate (PRPP) to anthranilate to yield N-(5'-phosphoribosyl)-anthranilate (PRA). In Desulforudis audaxviator (strain MP104C), this protein is Anthranilate phosphoribosyltransferase.